A 419-amino-acid polypeptide reads, in one-letter code: UDP-N-acetylglucosamine 1-carboxyvinyltransferase (419 aa).

22-23 (KN) provides a ligand contact to phosphoenolpyruvate. R93 is a binding site for UDP-N-acetyl-alpha-D-glucosamine. C117 acts as the Proton donor in catalysis. C117 is modified (2-(S-cysteinyl)pyruvic acid O-phosphothioketal). The UDP-N-acetyl-alpha-D-glucosamine site is built by D306 and I328.

Belongs to the EPSP synthase family. MurA subfamily.

Its subcellular location is the cytoplasm. It carries out the reaction phosphoenolpyruvate + UDP-N-acetyl-alpha-D-glucosamine = UDP-N-acetyl-3-O-(1-carboxyvinyl)-alpha-D-glucosamine + phosphate. The protein operates within cell wall biogenesis; peptidoglycan biosynthesis. Its function is as follows. Cell wall formation. Adds enolpyruvyl to UDP-N-acetylglucosamine. The protein is UDP-N-acetylglucosamine 1-carboxyvinyltransferase of Idiomarina loihiensis (strain ATCC BAA-735 / DSM 15497 / L2-TR).